Reading from the N-terminus, the 1090-residue chain is Nitrogen assimilation transcription factor nit-4 (1090 aa).

Residues 1 to 14 are compositionally biased toward polar residues; it reads MNSSDVQMMSSQDA. Residues 1 to 43 are disordered; sequence MNSSDVQMMSSQDAPGSAGLAPDNIASSLPSKKKSRRGADPTN. Residues 53-81 constitute a DNA-binding region (zn(2)-C6 fungal-type); the sequence is CIACRRRKSKCDGALPSCAACASVYGTEC. 6 disordered regions span residues 145–176, 666–689, 773–798, 825–875, 936–999, and 1033–1053; these read RRDE…SQAV, FSTS…PAPP, HQHH…YQQQ, GIPT…VKPP, QGWD…QRQQ, and HGAE…TTVG. Residues 167–176 are compositionally biased toward basic and acidic residues; the sequence is GRDDATSQAV. Polar residues predominate over residues 666 to 677; sequence FSTSEVPSPNRT. Low complexity predominate over residues 849 to 859; sequence QPQQQQQPQAQ. Composition is skewed to gly residues over residues 940–965 and 976–988; these read LEGG…GGAG and NIGG…GGST. Positions 990 to 999 are enriched in low complexity; it reads QRQQQQQRQQ.

The protein resides in the nucleus. In terms of biological role, pathway-specific regulatory gene of nitrate assimilation; it activates the transcription of the genes for nitrate and nitrite reductases. This Neurospora crassa (strain ATCC 24698 / 74-OR23-1A / CBS 708.71 / DSM 1257 / FGSC 987) protein is Nitrogen assimilation transcription factor nit-4 (nit-4).